Reading from the N-terminus, the 270-residue chain is Acyl-[acyl-carrier-protein]--UDP-N-acetylglucosamine O-acyltransferase (270 aa).

Substrate is bound by residues 69-72 (QDLK), His121, His140, and Gln157.

Belongs to the transferase hexapeptide repeat family. LpxA subfamily. As to quaternary structure, homotrimer.

It is found in the cytoplasm. The enzyme catalyses a (3R)-hydroxyacyl-[ACP] + UDP-N-acetyl-alpha-D-glucosamine = a UDP-3-O-[(3R)-3-hydroxyacyl]-N-acetyl-alpha-D-glucosamine + holo-[ACP]. Its pathway is glycolipid biosynthesis; lipid IV(A) biosynthesis; lipid IV(A) from (3R)-3-hydroxytetradecanoyl-[acyl-carrier-protein] and UDP-N-acetyl-alpha-D-glucosamine: step 1/6. Involved in the biosynthesis of lipid A, a phosphorylated glycolipid that anchors the lipopolysaccharide to the outer membrane of the cell. The sequence is that of Acyl-[acyl-carrier-protein]--UDP-N-acetylglucosamine O-acyltransferase from Helicobacter pylori (strain ATCC 700392 / 26695) (Campylobacter pylori).